The chain runs to 378 residues: Lipid-A-disaccharide synthase (378 aa).

The protein belongs to the LpxB family.

It catalyses the reaction a lipid X + a UDP-2-N,3-O-bis[(3R)-3-hydroxyacyl]-alpha-D-glucosamine = a lipid A disaccharide + UDP + H(+). It functions in the pathway bacterial outer membrane biogenesis; LPS lipid A biosynthesis. In terms of biological role, condensation of UDP-2,3-diacylglucosamine and 2,3-diacylglucosamine-1-phosphate to form lipid A disaccharide, a precursor of lipid A, a phosphorylated glycolipid that anchors the lipopolysaccharide to the outer membrane of the cell. The sequence is that of Lipid-A-disaccharide synthase from Pseudomonas paraeruginosa (strain DSM 24068 / PA7) (Pseudomonas aeruginosa (strain PA7)).